A 476-amino-acid chain; its full sequence is Glucose-1-phosphate adenylyltransferase (476 aa).

Alpha-D-glucose 1-phosphate contacts are provided by residues Tyr114, Gly179, 194-195 (EK), and Ser212.

Belongs to the bacterial/plant glucose-1-phosphate adenylyltransferase family. Homotetramer.

The catalysed reaction is alpha-D-glucose 1-phosphate + ATP + H(+) = ADP-alpha-D-glucose + diphosphate. It functions in the pathway glycan biosynthesis; glycogen biosynthesis. Its function is as follows. Involved in the biosynthesis of ADP-glucose, a building block required for the elongation reactions to produce glycogen. Catalyzes the reaction between ATP and alpha-D-glucose 1-phosphate (G1P) to produce pyrophosphate and ADP-Glc. This chain is Glucose-1-phosphate adenylyltransferase, found in Yersinia pestis.